We begin with the raw amino-acid sequence, 511 residues long: Trigger factor (511 aa).

Residues 168–253 (GDLLTIDFVG…VKEVKAPAEV (86 aa)) form the PPIase FKBP-type domain. The disordered stretch occupies residues 446 to 511 (DEHEHHHHDH…KAPAKKKKED (66 aa)). Residues 455 to 478 (HDHDHDHDHDHDHGHDHDHGDEKP) are compositionally biased toward basic and acidic residues. Basic residues predominate over residues 479-488 (KKKPAAKKAA). The segment covering 489–498 (AKSDDGEAKP) has biased composition (basic and acidic residues). Over residues 499 to 511 (AAKKAPAKKKKED) the composition is skewed to basic residues.

It belongs to the FKBP-type PPIase family. Tig subfamily.

It localises to the cytoplasm. It carries out the reaction [protein]-peptidylproline (omega=180) = [protein]-peptidylproline (omega=0). Involved in protein export. Acts as a chaperone by maintaining the newly synthesized protein in an open conformation. Functions as a peptidyl-prolyl cis-trans isomerase. This Parvibaculum lavamentivorans (strain DS-1 / DSM 13023 / NCIMB 13966) protein is Trigger factor.